Consider the following 275-residue polypeptide: Polar tube protein 2 (275 aa).

A signal peptide spans M1–S18. Residues N132 and N248 are each glycosylated (N-linked (GlcNAc...) asparagine). The tract at residues I233–E275 is disordered. The span at Q234 to T249 shows a compositional bias: basic and acidic residues. A compositionally biased stretch (acidic residues) spans Y253–E263.

The protein localises to the spore polar tube. In terms of biological role, involved in formation of a polar tube through which the infectious agent is passed on to the host cell. The protein is Polar tube protein 2 (PTP2) of Encephalitozoon intestinalis (Microsporidian parasite).